Here is a 235-residue protein sequence, read N- to C-terminus: Probable queuosine precursor transporter (235 aa).

6 consecutive transmembrane segments (helical) span residues 17 to 37 (IIWL…FVQI), 56 to 76 (FHST…DLTV), 87 to 107 (IIFV…VLFS), 127 to 147 (IAIA…IVFN), 155 to 175 (WWVA…FVFF), and 201 to 221 (FKLF…LNVI).

Belongs to the vitamin uptake transporter (VUT/ECF) (TC 2.A.88) family. Q precursor transporter subfamily.

It localises to the cell inner membrane. In terms of biological role, involved in the import of queuosine (Q) precursors, required for Q precursor salvage. This is Probable queuosine precursor transporter from Haemophilus influenzae (strain ATCC 51907 / DSM 11121 / KW20 / Rd).